A 462-amino-acid polypeptide reads, in one-letter code: Protein MOS2 (462 aa).

The span at 1 to 10 (MKLSFSLPSK) shows a compositional bias: low complexity. The disordered stretch occupies residues 1–32 (MKLSFSLPSKSKPKVTATTADGNNAVDDGTSK). One can recognise a G-patch domain in the interval 156-202 (VDGFGAALMAGYGWKPGKGIGKNAKEDVEIKEYKKWTAKEGLGFDPD). Residues 231–258 (VFFVGKEVRIIAGRDVGLKGKIVEKPGS) form the KOW 1 domain. The segment covering 301-336 (DREKDKKTSGRGRGAERGSRSEVRASEKQDRGQTRE) has biased composition (basic and acidic residues). Positions 301-340 (DREKDKKTSGRGRGAERGSRSEVRASEKQDRGQTRERKVK) are disordered. The region spanning 401 to 428 (LPRRGGPVLVLSGKHKGVYGNLVEKDLD) is the KOW 2 domain.

It belongs to the MOS2 family.

It is found in the nucleus. Required for innate and induced resistance to pathogens such as compatible and incompatible isolates of P.syringae and P.parasitica. This chain is Protein MOS2 (MOS2), found in Arabidopsis thaliana (Mouse-ear cress).